Here is a 369-residue protein sequence, read N- to C-terminus: Anhydro-N-acetylmuramic acid kinase (369 aa).

An ATP-binding site is contributed by 12 to 19 (GTSMDGVD).

It belongs to the anhydro-N-acetylmuramic acid kinase family.

It catalyses the reaction 1,6-anhydro-N-acetyl-beta-muramate + ATP + H2O = N-acetyl-D-muramate 6-phosphate + ADP + H(+). It participates in amino-sugar metabolism; 1,6-anhydro-N-acetylmuramate degradation. The protein operates within cell wall biogenesis; peptidoglycan recycling. Functionally, catalyzes the specific phosphorylation of 1,6-anhydro-N-acetylmuramic acid (anhMurNAc) with the simultaneous cleavage of the 1,6-anhydro ring, generating MurNAc-6-P. Is required for the utilization of anhMurNAc either imported from the medium or derived from its own cell wall murein, and thus plays a role in cell wall recycling. The sequence is that of Anhydro-N-acetylmuramic acid kinase from Shewanella woodyi (strain ATCC 51908 / MS32).